We begin with the raw amino-acid sequence, 185 residues long: Ribosome-recycling factor (185 aa).

This sequence belongs to the RRF family.

It is found in the cytoplasm. Responsible for the release of ribosomes from messenger RNA at the termination of protein biosynthesis. May increase the efficiency of translation by recycling ribosomes from one round of translation to another. In Shewanella sediminis (strain HAW-EB3), this protein is Ribosome-recycling factor.